A 420-amino-acid chain; its full sequence is Bone morphogenetic protein 2 (420 aa).

Positions 1-23 are cleaved as a signal peptide; sequence MVAVVRSLMVLLLAQVLLEGATG. A propeptide spanning residues 24-303 is cleaved from the precursor; the sequence is LIPEVGRRRY…DSVLHTREKR (280 aa). Asparagine 138, asparagine 167, asparagine 168, asparagine 172, and asparagine 362 each carry an N-linked (GlcNAc...) asparagine glycan. Disulfide bonds link cysteine 320–cysteine 385, cysteine 349–cysteine 417, and cysteine 353–cysteine 419.

The protein belongs to the TGF-beta family. Homodimer; disulfide-linked.

It is found in the secreted. Induces cartilage and bone formation. The sequence is that of Bone morphogenetic protein 2 (bmp2) from Tetraodon nigroviridis (Spotted green pufferfish).